The chain runs to 485 residues: NADH-quinone oxidoreductase subunit N (485 aa).

14 helical membrane-spanning segments follow: residues 8 to 28 (LIAL…MLSI), 35 to 55 (FLNA…LWFV), 71 to 91 (GFAM…CTFA), 105 to 125 (FYLL…ANHL), 127 to 147 (TLFL…GYAF), 159 to 179 (YTIL…LVYA), 203 to 223 (LLAG…LVPF), 235 to 255 (PAPV…GVVM), 271 to 291 (VVLG…ALSQ), 297 to 317 (LLGY…IALQ), 326 to 346 (VGVY…VVSL), 373 to 393 (AAVM…LGFI), 408 to 430 (WWLV…RVAV), and 455 to 475 (IVVL…QPLI).

It belongs to the complex I subunit 2 family. NDH-1 is composed of 13 different subunits. Subunits NuoA, H, J, K, L, M, N constitute the membrane sector of the complex.

The protein localises to the cell inner membrane. The enzyme catalyses a quinone + NADH + 5 H(+)(in) = a quinol + NAD(+) + 4 H(+)(out). NDH-1 shuttles electrons from NADH, via FMN and iron-sulfur (Fe-S) centers, to quinones in the respiratory chain. The immediate electron acceptor for the enzyme in this species is believed to be ubiquinone. Couples the redox reaction to proton translocation (for every two electrons transferred, four hydrogen ions are translocated across the cytoplasmic membrane), and thus conserves the redox energy in a proton gradient. This is NADH-quinone oxidoreductase subunit N from Salmonella paratyphi A (strain ATCC 9150 / SARB42).